The primary structure comprises 248 residues: Acetylglutamate kinase (248 aa).

Residues 41–42 (GG), arginine 63, and asparagine 155 contribute to the substrate site.

It belongs to the acetylglutamate kinase family. ArgB subfamily.

It localises to the cytoplasm. It carries out the reaction N-acetyl-L-glutamate + ATP = N-acetyl-L-glutamyl 5-phosphate + ADP. It functions in the pathway amino-acid biosynthesis; L-arginine biosynthesis; N(2)-acetyl-L-ornithine from L-glutamate: step 2/4. Functionally, catalyzes the ATP-dependent phosphorylation of N-acetyl-L-glutamate. This Lactiplantibacillus plantarum (strain ATCC BAA-793 / NCIMB 8826 / WCFS1) (Lactobacillus plantarum) protein is Acetylglutamate kinase.